Consider the following 179-residue polypeptide: Natural killer cells antigen CD94 (179 aa).

Topologically, residues 1-10 (MAVFKTTLWR) are cytoplasmic. The helical; Signal-anchor for type II membrane protein transmembrane segment at 11–31 (LISGTLGIICLSLMATLGILL) threads the bilayer. Over 32–179 (KNSFTKLSIE…NRYICKQQLI (148 aa)) the chain is Extracellular. Cystine bridges form between C58–C70 and C61–C72. The C-type lectin domain occupies 68–175 (YRCNCYFISS…CEDKNRYICK (108 aa)). N-linked (GlcNAc...) asparagine glycosylation is found at N83 and N132. Disulfide bonds link C89/C174 and C152/C166.

As to quaternary structure, can form disulfide-bonded heterodimer with NKG2 family members KLRC1 and KLRC2. KLRD1-KLRC1 heterodimer interacts with peptide-bound MHC-E-B2M heterotrimeric complex. KLRD1 plays a prominent role in directly interacting with MHC-E. KLRD1-KLRC1 interacts with much higher affinity with peptide-bound MHC-E-B2M than KLRD1-KLRC2. Interacts with the adapter protein TYROBP/DAP12; this interaction is required for cell surface expression and cell activation. As to expression, natural killer cells.

The protein resides in the cell membrane. Its function is as follows. Immune receptor involved in self-nonself discrimination. In complex with KLRC1 or KLRC2 on cytotoxic and regulatory lymphocyte subsets, recognizes non-classical major histocompatibility (MHC) class Ib molecule MHC-E loaded with self-peptides derived from the signal sequence of classical MHC class Ia and non-classical MHC class Ib molecules. Enables cytotoxic cells to monitor the expression of MHC class I molecules in healthy cells and to tolerate self. Primarily functions as a ligand binding subunit as it lacks the capacity to signal. In terms of biological role, KLRD1-KLRC1 acts as an immune inhibitory receptor. Key inhibitory receptor on natural killer (NK) cells that regulates their activation and effector functions. Dominantly counteracts T cell receptor signaling on a subset of memory/effector CD8-positive T cells as part of an antigen-driven response to avoid autoimmunity. On intraepithelial CD8-positive gamma-delta regulatory T cells triggers TGFB1 secretion, which in turn limits the cytotoxic programming of intraepithelial CD8-positive alpha-beta T cells, distinguishing harmless from pathogenic antigens. In MHC-E-rich tumor microenvironment, acts as an immune inhibitory checkpoint and may contribute to progressive loss of effector functions of NK cells and tumor-specific T cells, a state known as cell exhaustion. Upon MHC-E-peptide binding, transmits intracellular signals through KLRC1 immunoreceptor tyrosine-based inhibition motifs (ITIMs) by recruiting INPP5D/SHIP-1 and INPPL1/SHIP-2 tyrosine phosphatases to ITIMs, and ultimately opposing signals transmitted by activating receptors through dephosphorylation of proximal signaling molecules. Functionally, KLRD1-KLRC2 acts as an immune activating receptor. On cytotoxic lymphocyte subsets recognizes MHC-E loaded with signal sequence-derived peptides from non-classical MHC class Ib MHC-G molecules, likely playing a role in the generation and effector functions of adaptive NK cells and in maternal-fetal tolerance during pregnancy. Regulates the effector functions of terminally differentiated cytotoxic lymphocyte subsets, and in particular may play a role in adaptive NK cell response to viral infection. Upon MHC-E-peptide binding, transmits intracellular signals via the adapter protein TYROBP/DAP12, triggering the phosphorylation of proximal signaling molecules and cell activation. The chain is Natural killer cells antigen CD94 (KLRD1) from Pan troglodytes (Chimpanzee).